Reading from the N-terminus, the 158-residue chain is Transcription elongation factor GreB (158 aa).

It belongs to the GreA/GreB family. GreB subfamily.

Its function is as follows. Necessary for efficient RNA polymerase transcription elongation past template-encoded arresting sites. The arresting sites in DNA have the property of trapping a certain fraction of elongating RNA polymerases that pass through, resulting in locked ternary complexes. Cleavage of the nascent transcript by cleavage factors such as GreA or GreB allows the resumption of elongation from the new 3'terminus. GreB releases sequences of up to 9 nucleotides in length. This chain is Transcription elongation factor GreB, found in Escherichia coli (strain K12).